Here is a 124-residue protein sequence, read N- to C-terminus: MQKIVLLGLAGALGSLARYGLAGLVQRAAPGSFPLGTFIVNVLGCLAFGFVWGVCENRISLHPDLRVVLLTGFMGAFTTFSTFTFESLGLMETGQWLAFALYAGGQLLLGLALLWLGLGTGRLV.

4 consecutive transmembrane segments (helical) span residues 4–24, 35–55, 67–87, and 96–116; these read IVLL…LAGL, LGTF…WGVC, VVLL…TFES, and WLAF…LLWL. Residues Gly75 and Thr78 each coordinate Na(+).

The protein belongs to the fluoride channel Fluc/FEX (TC 1.A.43) family.

The protein localises to the cell inner membrane. It carries out the reaction fluoride(in) = fluoride(out). With respect to regulation, na(+) is not transported, but it plays an essential structural role and its presence is essential for fluoride channel function. Its function is as follows. Fluoride-specific ion channel. Important for reducing fluoride concentration in the cell, thus reducing its toxicity. This chain is Fluoride-specific ion channel FluC, found in Nitratidesulfovibrio vulgaris (strain DSM 19637 / Miyazaki F) (Desulfovibrio vulgaris).